Here is a 247-residue protein sequence, read N- to C-terminus: Carboxy-S-adenosyl-L-methionine synthase (247 aa).

S-adenosyl-L-methionine contacts are provided by residues tyrosine 40, 65–67 (GSS), 90–91 (DN), 122–123 (DI), asparagine 137, and arginine 204.

This sequence belongs to the class I-like SAM-binding methyltransferase superfamily. Cx-SAM synthase family. Homodimer.

It catalyses the reaction prephenate + S-adenosyl-L-methionine = carboxy-S-adenosyl-L-methionine + 3-phenylpyruvate + H2O. Its function is as follows. Catalyzes the conversion of S-adenosyl-L-methionine (SAM) to carboxy-S-adenosyl-L-methionine (Cx-SAM). This is Carboxy-S-adenosyl-L-methionine synthase from Pseudomonas fluorescens (strain ATCC BAA-477 / NRRL B-23932 / Pf-5).